The following is a 292-amino-acid chain: Alpha-soluble NSF attachment protein (292 aa).

Serine 2 is subject to N-acetylserine. Lysine 261 participates in a covalent cross-link: Glycyl lysine isopeptide (Lys-Gly) (interchain with G-Cter in ubiquitin).

This sequence belongs to the SNAP family. Binds to vacuolar cis-SNARE complexes composed of the v-SNAREs NYV1, VTI1 and YKT6, and the t-SNAREs VAM3 and VAM7. Interacts with SEC18.

It is found in the membrane. In terms of biological role, SNARE complex protein that binds to cis-SNARE complexes on membranes and is required for vesicular transport between the endoplasmic reticulum and the Golgi apparatus and for homotypic vacuole fusion. During the priming step of membrane fusion, is released from cis-SNARE complexes by SEC18 to establish a pool of unpaired SNAREs, which are required for interactions in trans during docking and fusion steps. Can displace HOPS from SNARE complexes, which may be a prerequisite for trans-SNARE complex disassembly and subsequent rounds of priming, docking and fusion. The polypeptide is Alpha-soluble NSF attachment protein (SEC17) (Saccharomyces cerevisiae (strain ATCC 204508 / S288c) (Baker's yeast)).